The sequence spans 219 residues: Ribonuclease HII (219 aa).

Residues 22–219 (GLVAGVDEVG…LLAMRMEAVV (198 aa)) form the RNase H type-2 domain. Residues aspartate 28, glutamate 29, and aspartate 125 each coordinate a divalent metal cation.

It belongs to the RNase HII family. Requires Mn(2+) as cofactor. Mg(2+) is required as a cofactor.

The protein localises to the cytoplasm. The catalysed reaction is Endonucleolytic cleavage to 5'-phosphomonoester.. In terms of biological role, endonuclease that specifically degrades the RNA of RNA-DNA hybrids. The sequence is that of Ribonuclease HII from Granulibacter bethesdensis (strain ATCC BAA-1260 / CGDNIH1).